We begin with the raw amino-acid sequence, 523 residues long: UDP-glucuronosyltransferase 3A1 (523 aa).

Residues 1 to 22 (MAAHRSWLLVSFFLLEVLLLEA) form the signal peptide. Residues 23–487 (AKILTISTLS…QPWHEQYMLD (465 aa)) lie on the Extracellular side of the membrane. The N-linked (GlcNAc...) asparagine glycan is linked to Asn-70. Residues 488-508 (VFLFLLGLTLGTLWLSVKVLV) form a helical membrane-spanning segment. The Cytoplasmic portion of the chain corresponds to 509–523 (AVTRYLSISRKVKQA).

The protein belongs to the UDP-glycosyltransferase family. As to expression, highly expressed in kidney, while it is expressed at low levels in liver. Not detected in other tissues examined.

Its subcellular location is the membrane. It catalyses the reaction glucuronate acceptor + UDP-alpha-D-glucuronate = acceptor beta-D-glucuronoside + UDP + H(+). In terms of biological role, UDP-glucuronosyltransferases catalyze phase II biotransformation reactions in which lipophilic substrates are conjugated with glucuronic acid to increase water solubility and enhance excretion. They are of major importance in the conjugation and subsequent elimination of potentially toxic xenobiotics and endogenous compounds. The chain is UDP-glucuronosyltransferase 3A1 (Ugt3a1) from Mus musculus (Mouse).